The following is a 502-amino-acid chain: Lysine--tRNA ligase (502 aa).

Mg(2+) is bound by residues Glu398 and Glu405.

Belongs to the class-II aminoacyl-tRNA synthetase family. Homodimer. Mg(2+) serves as cofactor.

It is found in the cytoplasm. The enzyme catalyses tRNA(Lys) + L-lysine + ATP = L-lysyl-tRNA(Lys) + AMP + diphosphate. This chain is Lysine--tRNA ligase, found in Thermosipho africanus (strain TCF52B).